A 203-amino-acid polypeptide reads, in one-letter code: CASP-like protein 1B1 (203 aa).

At 1–24 (MALVNAEKPEVGSSPSSLGPRNKS) the chain is on the cytoplasmic side. The chain crosses the membrane as a helical span at residues 25-45 (WVLLMLRFVAFLATAAATIVM). Topologically, residues 46 to 76 (AANRETKTFVVATIGSTPIKATVTAKFQHTP) are extracellular. Residues 77 to 97 (AFVFFVIANGMGSIHNLVMIA) traverse the membrane as a helical segment. Over 98–114 (GDTFVRKFDYKGLRWVT) the chain is Cytoplasmic. A helical transmembrane segment spans residues 115-135 (VAILDMLTAALISGGVNAAVF). Over 136–165 (MAELGKNGNSHAKWNKICDRFGSFCDHGGA) the chain is Extracellular. Residues 166 to 186 (AIIASFIGLLLMLVISIISII) form a helical membrane-spanning segment. At 187–203 (KLLKPKSPLVDSHVLAP) the chain is on the cytoplasmic side.

This sequence belongs to the Casparian strip membrane proteins (CASP) family. In terms of assembly, homodimer and heterodimers.

Its subcellular location is the cell membrane. In Ricinus communis (Castor bean), this protein is CASP-like protein 1B1.